A 260-amino-acid chain; its full sequence is MMDPCSVGVQLRTTNECHKTYYTRHTGFKTLQELSSNDMLLLQLRTGMTLSGNNTICFHHAKVYIDRFEDLQKSCCDPFNIHKKLAKKNLHVIDLDDATFLSAKFGRQLVPGWKLCPKCTQIINGSVDVDSEDRQKRKPDSDGRTAKALRSLQFANPGKQTEFAPETGKREKRRLTKNATAGSDRQVIPAKSKVYDSQGLLIFSGMDLCDCLDEDCLGCFYACPACGSTKCGAECRCDRKWLYEQIEIEGGEIIHNKHAG.

At M1 the chain carries N-acetylmethionine. Residue K177 forms a Glycyl lysine isopeptide (Lys-Gly) (interchain with G-Cter in SUMO2) linkage. Residue S183 is modified to Phosphoserine.

Interacts with ARL14 and MYO1E.

It localises to the cytoplasm. Its function is as follows. Through its interaction with ARL14 and MYO1E, may connect MHC class II-containing cytoplasmic vesicles to the actin network and hence controls the movement of these vesicles along the actin cytoskeleton in dendritic cells. The polypeptide is ARL14 effector protein (ARL14EP) (Bos taurus (Bovine)).